Consider the following 195-residue polypeptide: Imidazoleglycerol-phosphate dehydratase (195 aa).

This sequence belongs to the imidazoleglycerol-phosphate dehydratase family.

The protein resides in the cytoplasm. It catalyses the reaction D-erythro-1-(imidazol-4-yl)glycerol 3-phosphate = 3-(imidazol-4-yl)-2-oxopropyl phosphate + H2O. It participates in amino-acid biosynthesis; L-histidine biosynthesis; L-histidine from 5-phospho-alpha-D-ribose 1-diphosphate: step 6/9. This Cereibacter sphaeroides (strain ATCC 17023 / DSM 158 / JCM 6121 / CCUG 31486 / LMG 2827 / NBRC 12203 / NCIMB 8253 / ATH 2.4.1.) (Rhodobacter sphaeroides) protein is Imidazoleglycerol-phosphate dehydratase.